Here is a 556-residue protein sequence, read N- to C-terminus: 2-succinyl-5-enolpyruvyl-6-hydroxy-3-cyclohexene-1-carboxylate synthase (556 aa).

The protein belongs to the TPP enzyme family. MenD subfamily. Homodimer. It depends on Mg(2+) as a cofactor. Mn(2+) serves as cofactor. The cofactor is thiamine diphosphate.

It catalyses the reaction isochorismate + 2-oxoglutarate + H(+) = 5-enolpyruvoyl-6-hydroxy-2-succinyl-cyclohex-3-ene-1-carboxylate + CO2. It participates in quinol/quinone metabolism; 1,4-dihydroxy-2-naphthoate biosynthesis; 1,4-dihydroxy-2-naphthoate from chorismate: step 2/7. It functions in the pathway quinol/quinone metabolism; menaquinone biosynthesis. Functionally, catalyzes the thiamine diphosphate-dependent decarboxylation of 2-oxoglutarate and the subsequent addition of the resulting succinic semialdehyde-thiamine pyrophosphate anion to isochorismate to yield 2-succinyl-5-enolpyruvyl-6-hydroxy-3-cyclohexene-1-carboxylate (SEPHCHC). The protein is 2-succinyl-5-enolpyruvyl-6-hydroxy-3-cyclohexene-1-carboxylate synthase of Klebsiella pneumoniae (strain 342).